The sequence spans 286 residues: 4-hydroxybenzoate octaprenyltransferase (286 aa).

A run of 7 helical transmembrane segments spans residues 22–42 (IGTL…EKAM), 45–65 (LSVL…GCVI), 98–118 (LFIV…LYTI), 143–163 (FFLG…TIEA), 213–233 (IIAL…YLSQ), 238–255 (YFIV…QCRL), and 266–286 (NAFL…LFGI).

The protein belongs to the UbiA prenyltransferase family. Requires Mg(2+) as cofactor.

The protein localises to the cell inner membrane. The enzyme catalyses all-trans-octaprenyl diphosphate + 4-hydroxybenzoate = 4-hydroxy-3-(all-trans-octaprenyl)benzoate + diphosphate. Its pathway is cofactor biosynthesis; ubiquinone biosynthesis. In terms of biological role, catalyzes the prenylation of para-hydroxybenzoate (PHB) with an all-trans polyprenyl group. Mediates the second step in the final reaction sequence of ubiquinone-8 (UQ-8) biosynthesis, which is the condensation of the polyisoprenoid side chain with PHB, generating the first membrane-bound Q intermediate 3-octaprenyl-4-hydroxybenzoate. This is 4-hydroxybenzoate octaprenyltransferase from Histophilus somni (strain 2336) (Haemophilus somnus).